Reading from the N-terminus, the 104-residue chain is Pyrimidine/purine nucleoside phosphorylase (104 aa).

This sequence belongs to the nucleoside phosphorylase PpnP family.

It carries out the reaction a purine D-ribonucleoside + phosphate = a purine nucleobase + alpha-D-ribose 1-phosphate. The enzyme catalyses adenosine + phosphate = alpha-D-ribose 1-phosphate + adenine. It catalyses the reaction cytidine + phosphate = cytosine + alpha-D-ribose 1-phosphate. The catalysed reaction is guanosine + phosphate = alpha-D-ribose 1-phosphate + guanine. It carries out the reaction inosine + phosphate = alpha-D-ribose 1-phosphate + hypoxanthine. The enzyme catalyses thymidine + phosphate = 2-deoxy-alpha-D-ribose 1-phosphate + thymine. It catalyses the reaction uridine + phosphate = alpha-D-ribose 1-phosphate + uracil. The catalysed reaction is xanthosine + phosphate = alpha-D-ribose 1-phosphate + xanthine. Catalyzes the phosphorolysis of diverse nucleosides, yielding D-ribose 1-phosphate and the respective free bases. Can use uridine, adenosine, guanosine, cytidine, thymidine, inosine and xanthosine as substrates. Also catalyzes the reverse reactions. This Colwellia psychrerythraea (strain 34H / ATCC BAA-681) (Vibrio psychroerythus) protein is Pyrimidine/purine nucleoside phosphorylase.